We begin with the raw amino-acid sequence, 154 residues long: 3-hydroxyacyl-[acyl-carrier-protein] dehydratase FabZ (154 aa).

H54 is an active-site residue.

The protein belongs to the thioester dehydratase family. FabZ subfamily.

It localises to the cytoplasm. It catalyses the reaction a (3R)-hydroxyacyl-[ACP] = a (2E)-enoyl-[ACP] + H2O. Functionally, involved in unsaturated fatty acids biosynthesis. Catalyzes the dehydration of short chain beta-hydroxyacyl-ACPs and long chain saturated and unsaturated beta-hydroxyacyl-ACPs. This is 3-hydroxyacyl-[acyl-carrier-protein] dehydratase FabZ from Chlamydia caviae (strain ATCC VR-813 / DSM 19441 / 03DC25 / GPIC) (Chlamydophila caviae).